The following is a 322-amino-acid chain: Phospho-N-acetylmuramoyl-pentapeptide-transferase (322 aa).

Helical transmembrane passes span 6 to 26, 54 to 74, 82 to 102, 122 to 142, 145 to 165, 176 to 196, 200 to 220, 227 to 247, 255 to 275, and 302 to 322; these read ASCIALVSSLTLTVIFLPLLI, TMGGTIFVIAAVISVIWVTAW, VWILVISLLGYGIIGFLDDGI, IIIAVVIVLIASSDHFNFGLY, FAGVVHSVALFVIFIIFWLVG, LDGLATGLSVVAYGTYAYIAF, NFAILAFCMSVIGGLIAFFIF, IFMGDAGSLALGGGLATVSIM, LLVGIVFVCETASVIMQVISF, and VDIVFWIVGLVGSILYLAIWG.

Belongs to the glycosyltransferase 4 family. MraY subfamily. Mg(2+) serves as cofactor.

It is found in the cell membrane. It catalyses the reaction UDP-N-acetyl-alpha-D-muramoyl-L-alanyl-gamma-D-glutamyl-L-lysyl-D-alanyl-D-alanine + di-trans,octa-cis-undecaprenyl phosphate = Mur2Ac(oyl-L-Ala-gamma-D-Glu-L-Lys-D-Ala-D-Ala)-di-trans,octa-cis-undecaprenyl diphosphate + UMP. It participates in cell wall biogenesis; peptidoglycan biosynthesis. Its function is as follows. Catalyzes the initial step of the lipid cycle reactions in the biosynthesis of the cell wall peptidoglycan: transfers peptidoglycan precursor phospho-MurNAc-pentapeptide from UDP-MurNAc-pentapeptide onto the lipid carrier undecaprenyl phosphate, yielding undecaprenyl-pyrophosphoryl-MurNAc-pentapeptide, known as lipid I. This is Phospho-N-acetylmuramoyl-pentapeptide-transferase from Lactobacillus helveticus (strain DPC 4571).